A 479-amino-acid polypeptide reads, in one-letter code: Glucagon receptor (479 aa).

A signal peptide spans 1-25; that stretch reads MPPARLRHPHLLLLLLLACQPQAPA. Residues 26 to 136 lie on the Extracellular side of the membrane; sequence AQAMDFLFQK…ELGVQREVAE (111 aa). Intrachain disulfides connect C43-C67, C58-C100, and C81-C121. N-linked (GlcNAc...) asparagine glycans are attached at residues N46, N59, N74, N78, and N117. Residues 137–161 traverse the membrane as a helical segment; it reads MYSSFQAMYTAGYSLSLAALLLALA. Over 162–173 the chain is Cytoplasmic; that stretch reads ILLGLSKLHCTR. Residues 174-198 form a helical membrane-spanning segment; the sequence is NYIHANLLASFVLRASSVLALDALL. Over 199–225 the chain is Extracellular; the sequence is KTRYSQRLGDDLSVSIWLSDEAVAGCR. Residues C224 and C294 are joined by a disulfide bond. A helical membrane pass occupies residues 226–249; that stretch reads VAAVFMQYGVVANYCWLLVEGVYL. At 250–263 the chain is on the cytoplasmic side; that stretch reads HSLLRQATIPERSC. Residues 264 to 285 form a helical membrane-spanning segment; it reads FPLYLAIGWGAPMLFVIPWAVV. The Extracellular portion of the chain corresponds to 286–303; it reads KCLFENIQCWTSNDNMGF. Residues 304–326 traverse the membrane as a helical segment; the sequence is WWILRFPVFLAILINFSIFIRVL. Residues 327-350 lie on the Cytoplasmic side of the membrane; sequence HVLVAKLRAHQMRCTDYKFRLARS. The chain crosses the membrane as a helical span at residues 351–369; that stretch reads TLTLIPLLGVHEVVFAFVT. Topologically, residues 370–381 are extracellular; sequence DEHAQGALRSAK. A helical membrane pass occupies residues 382–402; the sequence is LFFDLFLSSFQGLLVAVLYCF. The Cytoplasmic portion of the chain corresponds to 403–479; that stretch reads LNKEVQAELL…GLPGVAENPF (77 aa). Residues 426–479 are disordered; it reads KAHRVGSHSARPPSGPPSEKLLLSTGGSSNGTSQEPSAETHLASGLPGVAENPF. Low complexity predominate over residues 446–458; sequence LLLSTGGSSNGTS. The residue at position 458 (S458) is a Phosphoserine.

Belongs to the G-protein coupled receptor 2 family. Post-translationally, ligand-binding promotes phosphorylation of serine residues in the C-terminal cytoplasmic domain. Phosphorylation is important for receptor endocytosis after ligand-binding.

The protein localises to the cell membrane. Functionally, G-protein coupled receptor for glucagon that plays a central role in the regulation of blood glucose levels and glucose homeostasis. Regulates the rate of hepatic glucose production by promoting glycogen hydrolysis and gluconeogenesis. Plays an important role in mediating the responses to fasting. Ligand binding causes a conformation change that triggers signaling via guanine nucleotide-binding proteins (G proteins) and modulates the activity of down-stream effectors, such as adenylate cyclase. Promotes activation of adenylate cyclase. Besides, plays a role in signaling via a phosphatidylinositol-calcium second messenger system. The protein is Glucagon receptor of Sus scrofa (Pig).